The sequence spans 240 residues: Homeobox-leucine zipper protein HOX14 (240 aa).

Positions 26 to 64 (SGEVQGERPRARRRRRRGARCVGGGGGGGEVDGGDPKKR) are disordered. Residues 35-44 (RARRRRRRGA) are compositionally biased toward basic residues. The span at 46 to 56 (CVGGGGGGGEV) shows a compositional bias: gly residues. The homeobox DNA-binding region spans 59–118 (GDPKKRRLSDEQVEMLELSFREERKLETGRKVHLASELGLDPKQVAVWFQNRRARHKSKL). The stretch at 108-167 (QNRRARHKSKLLEEEFSKLKHAHDAAILHKCHLENEVLRLKERLVVAEEEVRRLRSAAGS) forms a coiled coil.

This sequence belongs to the HD-ZIP homeobox family. Class I subfamily. In terms of tissue distribution, expressed in roots, stems, leaf blades and panicles.

It localises to the nucleus. In terms of biological role, probable transcription factor. This chain is Homeobox-leucine zipper protein HOX14 (HOX14), found in Oryza sativa subsp. japonica (Rice).